Here is a 251-residue protein sequence, read N- to C-terminus: Adenosylcobinamide-GDP ribazoletransferase (251 aa).

7 consecutive transmembrane segments (helical) span residues 36–56, 60–80, 110–130, 141–161, 181–201, 202–222, and 231–251; these read LYPF…FVLS, VPIM…TGFL, VGAF…AGMF, ILIF…VSQE, EIIL…TLGI, NYLI…LKVK, and DVAG…LGII.

It belongs to the CobS family. Requires Mg(2+) as cofactor.

The protein resides in the cell membrane. It carries out the reaction alpha-ribazole + adenosylcob(III)inamide-GDP = adenosylcob(III)alamin + GMP + H(+). The catalysed reaction is alpha-ribazole 5'-phosphate + adenosylcob(III)inamide-GDP = adenosylcob(III)alamin 5'-phosphate + GMP + H(+). Its pathway is cofactor biosynthesis; adenosylcobalamin biosynthesis; adenosylcobalamin from cob(II)yrinate a,c-diamide: step 7/7. Its function is as follows. Joins adenosylcobinamide-GDP and alpha-ribazole to generate adenosylcobalamin (Ado-cobalamin). Also synthesizes adenosylcobalamin 5'-phosphate from adenosylcobinamide-GDP and alpha-ribazole 5'-phosphate. In Clostridium perfringens (strain ATCC 13124 / DSM 756 / JCM 1290 / NCIMB 6125 / NCTC 8237 / Type A), this protein is Adenosylcobinamide-GDP ribazoletransferase.